A 633-amino-acid polypeptide reads, in one-letter code: Ankyrin repeat and SOCS box protein 2 (633 aa).

The region spanning 26-45 (SEDELVQMAIEQSLADKTRG) is the UIM domain. ANK repeat units lie at residues 102–131 (APVD…NLSE), 135–165 (EGWL…VIDQ), 169–198 (QEET…EPDI), 202–231 (SRET…DTNH), 235–264 (RGWT…KVEA), 268–297 (YGIT…DINT), 301–330 (DSAS…DANK), 334–363 (DGML…RTRV), 366–395 (SGIS…DVNA), 408–437 (RRSS…DPNR), 438–467 (DVIN…NIDA), and 474–502 (TAFP…NGEP). The residue at position 369 (Ser-369) is a Phosphoserine. Residues 579 to 633 (EDWAVIKEKAEPPRPLAHLCRLRVRKAIGKYRIKLLDTLPLPGRLIRYLKYENTQ) form the SOCS box domain.

The protein belongs to the ankyrin SOCS box (ASB) family. As to quaternary structure, component of a probable ECS E3 ubiquitin-protein ligase complex which contains CUL5, either RBX1 or RNF7/RBX2, Elongin BC complex (ELOB and ELOC) and ASB2. Interacts with SKP2. Through its interaction with SKP2, likely to bridge the formation of dimeric E3-ubiquitin-protein ligase complexes composed of an ECS complex and an SCF(SKP2) complex. Interacts with JAK2; the interaction targets JAK2 for Notch-mediated proteasomal degradation. Interacts with TCF3/E2A; the interaction is mediated by SKP2 and targets TCF3 for Notch-mediated proteasomal degradation. Interacts with DES. Monoubiquitinated.

It localises to the cytoplasm. Its subcellular location is the cytoskeleton. The protein localises to the stress fiber. The protein resides in the myofibril. It is found in the sarcomere. It localises to the z line. It functions in the pathway protein modification; protein ubiquitination. Its function is as follows. Substrate-recognition component of a SCF-like ECS (Elongin-Cullin-SOCS-box protein) E3 ubiquitin-protein ligase complex which mediates the ubiquitination and subsequent proteasomal degradation of target proteins. Mediates Notch-induced ubiquitination and degradation of substrates including E2A and JAK2. Required during embryonic heart development for complete heart looping. Required for cardiomyocyte differentiation. Involved in myogenic differentiation and targets filamin FLNB for proteasomal degradation but not filamin FLNA. Also targets DES for proteasomal degradation. Acts as a negative regulator of skeletal muscle mass. In Bos taurus (Bovine), this protein is Ankyrin repeat and SOCS box protein 2.